A 242-amino-acid polypeptide reads, in one-letter code: uncharacterized protein (242 aa).

The 114-residue stretch at 3–116 folds into the Response regulatory domain; that stretch reads TALVIDDEQF…RLNKTVKRLN (114 aa). Asp-54 is modified (4-aspartylphosphate). One can recognise an HTH LytTR-type domain in the interval 139–240; it reads IPCIGHNRIV…LKVLKEMLGI (102 aa).

This is an uncharacterized protein from Vibrio parahaemolyticus serotype O3:K6 (strain RIMD 2210633).